The primary structure comprises 686 residues: Glycogenin (686 aa).

The UDP site is built by Leu13, Asn16, Tyr19, and Arg82. Positions 13, 16, 19, 82, 91, 107, 108, 109, 139, 140, 166, 169, and 170 each coordinate UDP-alpha-D-glucose. Positions 107, 108, and 109 each coordinate UDP. Mn(2+) is bound at residue Asp107. Asp109 lines the Mn(2+) pocket. O-linked (Glc...) tyrosine glycosylation is found at Tyr196 and Tyr198. Residues His213, Gly216, and Lys219 each contribute to the UDP site. His213 contributes to the Mn(2+) binding site. Residues Gly216 and Lys219 each coordinate UDP-alpha-D-glucose. Disordered regions lie at residues 264-331 (VKGE…ANFP), 381-444 (PEPT…RGNA), 460-533 (KHRR…GVPA), and 603-686 (KPLR…VLET). 2 stretches are compositionally biased toward low complexity: residues 285–308 (SSQS…YTSH) and 398–416 (SAAS…ASPT). The not required for catalytic activity stretch occupies residues 307–686 (SHGASWDASR…TEEERDVLET (380 aa)). Polar residues-rich tracts occupy residues 424 to 442 (VTPT…TTRG) and 471 to 483 (AATS…GRAQ). A compositionally biased stretch (acidic residues) spans 677-686 (TEEERDVLET).

Belongs to the glycosyltransferase 8 family. Glycogenin subfamily. Interacts with glycogen synthase gsy-1; the interaction is direct. Mn(2+) serves as cofactor.

It is found in the cytoplasm. Its subcellular location is the vacuole. It catalyses the reaction L-tyrosyl-[glycogenin] + UDP-alpha-D-glucose = alpha-D-glucosyl-L-tyrosyl-[glycogenin] + UDP + H(+). It carries out the reaction [1,4-alpha-D-glucosyl](n)-L-tyrosyl-[glycogenin] + UDP-alpha-D-glucose = [1,4-alpha-D-glucosyl](n+1)-L-tyrosyl-[glycogenin] + UDP + H(+). Self-glucosylating initiator of glycogen synthesis. It catalyzes the formation of a short alpha (1,4)-glucosyl chain covalently attached via a glucose 1-O-tyrosyl linkage to internal tyrosine residues and these chains act as primers for the elongation reaction catalyzed by glycogen synthase. The protein is Glycogenin of Neurospora crassa (strain ATCC 24698 / 74-OR23-1A / CBS 708.71 / DSM 1257 / FGSC 987).